Reading from the N-terminus, the 181-residue chain is Ribosome-recycling factor (181 aa).

This sequence belongs to the RRF family.

It is found in the cytoplasm. Functionally, responsible for the release of ribosomes from messenger RNA at the termination of protein biosynthesis. May increase the efficiency of translation by recycling ribosomes from one round of translation to another. This chain is Ribosome-recycling factor, found in Tropheryma whipplei (strain TW08/27) (Whipple's bacillus).